Here is a 303-residue protein sequence, read N- to C-terminus: Protoheme IX farnesyltransferase (303 aa).

The next 7 helical transmembrane spans lie at 25-45 (MGLV…AIVL), 54-74 (IPQI…ACAL), 118-138 (LLFA…VGYV), 151-171 (WNTV…WTAI), 177-197 (LVAV…FYAL), 230-250 (LVVL…FIVL), and 280-300 (FIYS…ISLI).

This sequence belongs to the UbiA prenyltransferase family. Protoheme IX farnesyltransferase subfamily. As to quaternary structure, interacts with CtaA.

The protein localises to the cell membrane. It catalyses the reaction heme b + (2E,6E)-farnesyl diphosphate + H2O = Fe(II)-heme o + diphosphate. The protein operates within porphyrin-containing compound metabolism; heme O biosynthesis; heme O from protoheme: step 1/1. Functionally, converts heme B (protoheme IX) to heme O by substitution of the vinyl group on carbon 2 of heme B porphyrin ring with a hydroxyethyl farnesyl side group. The chain is Protoheme IX farnesyltransferase from Staphylococcus saprophyticus subsp. saprophyticus (strain ATCC 15305 / DSM 20229 / NCIMB 8711 / NCTC 7292 / S-41).